Consider the following 95-residue polypeptide: Cell division topological specificity factor (95 aa).

The protein belongs to the MinE family.

Its function is as follows. Prevents the cell division inhibition by proteins MinC and MinD at internal division sites while permitting inhibition at polar sites. This ensures cell division at the proper site by restricting the formation of a division septum at the midpoint of the long axis of the cell. In Microcystis aeruginosa (strain NIES-843 / IAM M-2473), this protein is Cell division topological specificity factor.